Here is a 147-residue protein sequence, read N- to C-terminus: Large ribosomal subunit protein uL15 (147 aa).

Residues Met-1–Asn-45 are disordered. Basic and acidic residues predominate over residues Lys-15–Lys-28.

The protein belongs to the universal ribosomal protein uL15 family. As to quaternary structure, part of the 50S ribosomal subunit.

Functionally, binds to the 23S rRNA. This is Large ribosomal subunit protein uL15 from Rhodococcus jostii (strain RHA1).